Reading from the N-terminus, the 160-residue chain is UPF0225 protein PputW619_1140 (160 aa).

Belongs to the UPF0225 family.

The sequence is that of UPF0225 protein PputW619_1140 from Pseudomonas putida (strain W619).